We begin with the raw amino-acid sequence, 608 residues long: Histone-arginine methyltransferase CARM1 (608 aa).

A2 is subject to N-acetylalanine. The tract at residues 27–138 (ATVSVFPGAR…GHTLERSVFS (112 aa)) is interaction with C9orf72. The SAM-dependent MTase PRMT-type domain maps to 146-453 (AVQYFQFYGY…KRQSYDISIV (308 aa)). Q159, R168, G192, and E214 together coordinate S-adenosyl-L-methionine. S216 bears the Phosphoserine mark. K227 is covalently cross-linked (Glycyl lysine isopeptide (Lys-Gly) (interchain with G-Cter in ubiquitin)). Residues E243 and S271 each contribute to the S-adenosyl-L-methionine site. Residues 346–379 (RILMAKSVKYTVNFLEAKEGDLHRIEIPFKFHML) are required for nuclear translocation. The tract at residues 499–608 (TGSTYNLSSG…IPTNTMHYGS (110 aa)) is transactivation domain. Dimethylated arginine is present on R550.

Belongs to the class I-like SAM-binding methyltransferase superfamily. Protein arginine N-methyltransferase family. As to quaternary structure, homodimer. Interacts with NR1H4. Interacts with SNRPC. Interacts with the C-terminus of NCOA2/GRIP1, NCO3/ACTR and NCOA1/SRC1. Part of a complex consisting of CARM1, EP300/P300 and NCOA2/GRIP1. Interacts with FLII, TP53, myogenic factor MEF2, EP300/P300, TRIM24, CREBBP and CTNNB1. Interacts with RELA. Identified in a complex containing CARM1, TRIM24 and NCOA2/GRIP1. Interacts with NCOA3/SRC3. Interacts with SKP2. Interacts (via PH domain-like fold) with C9orf72. Interacts with PARP1; promoting PARP1 recruimtent to replication forks. In terms of assembly, (Microbial infection) Interacts with HTLV-1 protein Tax. Post-translationally, auto-methylated on Arg-550. Methylation enhances transcription coactivator activity. Methylation is required for its role in the regulation of pre-mRNA alternative splicing. Phosphorylation at Ser-216 is strongly increased during mitosis, and decreases rapidly to a very low, basal level after entry into the G1 phase of the cell cycle. Phosphorylation at Ser-216 may promote location in the cytosol. Phosphorylation at Ser-216 interferes with S-adenosyl-L-methionine binding and strongly reduces methyltransferase activity. In terms of processing, ubiquitinated by E3 ubiquitin-protein ligase complex containing FBXO9 at Lys-227; leading to proteasomal degradation. Overexpressed in prostate adenocarcinomas and high-grade prostatic intraepithelial neoplasia.

The protein localises to the nucleus. Its subcellular location is the cytoplasm. It is found in the chromosome. The catalysed reaction is L-arginyl-[protein] + 2 S-adenosyl-L-methionine = N(omega),N(omega)-dimethyl-L-arginyl-[protein] + 2 S-adenosyl-L-homocysteine + 2 H(+). Methylation of H3R17 (H3R17me) by CARM1 is stimulated by preacetylation of H3 'Lys-18' (H3K18ac) H3 'Lys-23' (H3K23ac) by EP300 and blocked by citrullination of H3 'Arg-17' (H3R17ci) by PADI4. In terms of biological role, methylates (mono- and asymmetric dimethylation) the guanidino nitrogens of arginyl residues in several proteins involved in DNA packaging, transcription regulation, pre-mRNA splicing, and mRNA stability. Recruited to promoters upon gene activation together with histone acetyltransferases from EP300/P300 and p160 families, methylates histone H3 at 'Arg-17' (H3R17me), forming mainly asymmetric dimethylarginine (H3R17me2a), leading to activation of transcription via chromatin remodeling. During nuclear hormone receptor activation and TCF7L2/TCF4 activation, acts synergically with EP300/P300 and either one of the p160 histone acetyltransferases NCOA1/SRC1, NCOA2/GRIP1 and NCOA3/ACTR or CTNNB1/beta-catenin to activate transcription. During myogenic transcriptional activation, acts together with NCOA3/ACTR as a coactivator for MEF2C. During monocyte inflammatory stimulation, acts together with EP300/P300 as a coactivator for NF-kappa-B. Acts as a coactivator for PPARG, promotes adipocyte differentiation and the accumulation of brown fat tissue. Plays a role in the regulation of pre-mRNA alternative splicing by methylation of splicing factors. Also seems to be involved in p53/TP53 transcriptional activation. Methylates EP300/P300, both at 'Arg-2142', which may loosen its interaction with NCOA2/GRIP1, and at 'Arg-580' and 'Arg-604' in the KIX domain, which impairs its interaction with CREB and inhibits CREB-dependent transcriptional activation. Also methylates arginine residues in RNA-binding proteins PABPC1, ELAVL1 and ELAV4, which may affect their mRNA-stabilizing properties and the half-life of their target mRNAs. Acts as a transcriptional coactivator of ACACA/acetyl-CoA carboxylase by enriching H3R17 methylation at its promoter, thereby positively regulating fatty acid synthesis. Independently of its methyltransferase activity, involved in replication fork progression: promotes PARP1 recruitment to replication forks, leading to poly-ADP-ribosylation of chromatin at replication forks and reduced fork speed. This chain is Histone-arginine methyltransferase CARM1 (CARM1), found in Homo sapiens (Human).